The sequence spans 282 residues: Protein-export membrane protein SecF (282 aa).

Transmembrane regions (helical) follow at residues 16-36, 126-146, 148-168, 169-189, 221-241, and 253-273; these read MVAL…FNTV, QAIW…FVAF, IFIP…ITAA, FMDV…LMLI, GIIM…VFSL, and VLII…AGLL.

The protein belongs to the SecD/SecF family. SecF subfamily. Part of the protein translocation apparatus. Forms a complex with SecD.

The protein localises to the cell membrane. Functionally, involved in protein export. This is Protein-export membrane protein SecF from Methanolacinia petrolearia (strain DSM 11571 / OCM 486 / SEBR 4847) (Methanoplanus petrolearius).